The following is a 429-amino-acid chain: Enolase (429 aa).

Q162 is a binding site for (2R)-2-phosphoglycerate. E204 serves as the catalytic Proton donor. 3 residues coordinate Mg(2+): D242, E289, and D316. (2R)-2-phosphoglycerate contacts are provided by K341, R370, S371, and K392. K341 serves as the catalytic Proton acceptor.

Belongs to the enolase family. Requires Mg(2+) as cofactor.

Its subcellular location is the cytoplasm. It localises to the secreted. The protein resides in the cell surface. It carries out the reaction (2R)-2-phosphoglycerate = phosphoenolpyruvate + H2O. The protein operates within carbohydrate degradation; glycolysis; pyruvate from D-glyceraldehyde 3-phosphate: step 4/5. Its function is as follows. Catalyzes the reversible conversion of 2-phosphoglycerate (2-PG) into phosphoenolpyruvate (PEP). It is essential for the degradation of carbohydrates via glycolysis. The polypeptide is Enolase (Flavobacterium psychrophilum (strain ATCC 49511 / DSM 21280 / CIP 103535 / JIP02/86)).